The primary structure comprises 1334 residues: Lysine-specific demethylase 3A-B (1334 aa).

Disordered regions lie at residues 243 to 288, 352 to 382, and 514 to 533; these read DQND…KTSF, PGIQ…SQNL, and KPQE…VTYP. Residues 267-283 are compositionally biased toward basic and acidic residues; that stretch reads TEVKQTRNEEVPSKDVT. The C6-type zinc-finger motif lies at 684-709; sequence CDACDTTIFNLHWVCPKCGFGVCVDC. Residues 897 to 901 carry the LXXLL motif motif; the sequence is LRNLL. Residues 1089 to 1294 form the JmjC domain; sequence RREGKLNLAA…HCFCLTQEFR (206 aa). Fe cation is bound by residues histidine 1133, aspartate 1135, and histidine 1262.

The protein belongs to the JHDM2 histone demethylase family. The cofactor is Fe(2+).

The protein localises to the cytoplasm. It localises to the nucleus. It catalyses the reaction N(6),N(6)-dimethyl-L-lysyl(9)-[histone H3] + 2 2-oxoglutarate + 2 O2 = L-lysyl(9)-[histone H3] + 2 formaldehyde + 2 succinate + 2 CO2. In terms of biological role, histone demethylase that specifically demethylates 'Lys-9' of histone H3, thereby playing a central role in histone code. Preferentially demethylates mono- and dimethylated H3 'Lys-9' residue, with a preference for dimethylated residue, while it has weak or no activity on trimethylated H3 'Lys-9'. Demethylation of Lys residue generates formaldehyde and succinate. The sequence is that of Lysine-specific demethylase 3A-B (kdm3a-b) from Xenopus laevis (African clawed frog).